The following is a 479-amino-acid chain: Ribulose bisphosphate carboxylase large chain (479 aa).

The propeptide occupies Met1–Ser2. Substrate is bound by residues Asn123 and Thr173. Lys175 (proton acceptor) is an active-site residue. Lys177 is a binding site for substrate. Residues Lys201, Asp203, and Glu204 each coordinate Mg(2+). Position 201 is an N6-carboxylysine (Lys201). Position 208 is a phosphoserine (Ser208). His294 (proton acceptor) is an active-site residue. Positions 295 and 327 each coordinate substrate. Thr330 is modified (phosphothreonine). Ser379 contacts substrate.

Belongs to the RuBisCO large chain family. Type I subfamily. In terms of assembly, heterohexadecamer of 8 large chains and 8 small chains; disulfide-linked. The disulfide link is formed within the large subunit homodimers. The cofactor is Mg(2+). The disulfide bond which can form in the large chain dimeric partners within the hexadecamer appears to be associated with oxidative stress and protein turnover.

The protein resides in the plastid. Its subcellular location is the chloroplast. It catalyses the reaction 2 (2R)-3-phosphoglycerate + 2 H(+) = D-ribulose 1,5-bisphosphate + CO2 + H2O. The catalysed reaction is D-ribulose 1,5-bisphosphate + O2 = 2-phosphoglycolate + (2R)-3-phosphoglycerate + 2 H(+). Functionally, ruBisCO catalyzes two reactions: the carboxylation of D-ribulose 1,5-bisphosphate, the primary event in carbon dioxide fixation, as well as the oxidative fragmentation of the pentose substrate in the photorespiration process. Both reactions occur simultaneously and in competition at the same active site. This is Ribulose bisphosphate carboxylase large chain from Olimarabidopsis pumila (Dwarf rocket).